A 172-amino-acid polypeptide reads, in one-letter code: Stellate protein CG33239/CG33241 (172 aa).

Belongs to the casein kinase 2 subunit beta family. Interacts in vitro with the casein kinase 2 alpha subunit (CkII-alpha). The relevance of such interaction is however unclear in vivo. In terms of tissue distribution, probably not expressed in wild-type flies. In males lacking the Y chromosome, it is testis-specific and constitutes the main component of star-shaped crystals.

Functionally, unknown. In males lacking the Y chromosome, its strong overexpression leads to the appearance of proteinaceous star-shaped crystals in the primary spermatocytes causing meiotic drive, possibly by interfering with normal casein kinase 2 activity. This Drosophila melanogaster (Fruit fly) protein is Stellate protein CG33239/CG33241 (Ste:CG33239).